The chain runs to 60 residues: Putative potassium channel blocker TXKS1 (60 aa).

Positions 1–28 are cleaved as a signal peptide; the sequence is MNRLTTIILMLIVINVIMDDISESKVAA. 3 cysteine pairs are disulfide-bonded: C32–C49, C35–C55, and C39–C57. K59 bears the Lysine amide mark.

As to expression, expressed by the venom gland.

The protein resides in the secreted. Functionally, inhibits potassium channels. In Olivierus martensii (Manchurian scorpion), this protein is Putative potassium channel blocker TXKS1.